The following is a 316-amino-acid chain: 4-hydroxy-3-methylbut-2-enyl diphosphate reductase (316 aa).

Position 12 (Cys12) interacts with [4Fe-4S] cluster. 2 residues coordinate (2E)-4-hydroxy-3-methylbut-2-enyl diphosphate: His41 and His74. 2 residues coordinate dimethylallyl diphosphate: His41 and His74. Isopentenyl diphosphate is bound by residues His41 and His74. Cys96 is a [4Fe-4S] cluster binding site. His124 provides a ligand contact to (2E)-4-hydroxy-3-methylbut-2-enyl diphosphate. His124 serves as a coordination point for dimethylallyl diphosphate. His124 contributes to the isopentenyl diphosphate binding site. Glu126 serves as the catalytic Proton donor. Thr167 is a (2E)-4-hydroxy-3-methylbut-2-enyl diphosphate binding site. Cys197 serves as a coordination point for [4Fe-4S] cluster. 4 residues coordinate (2E)-4-hydroxy-3-methylbut-2-enyl diphosphate: Ser225, Ser226, Asn227, and Ser269. Dimethylallyl diphosphate contacts are provided by Ser225, Ser226, Asn227, and Ser269. Residues Ser225, Ser226, Asn227, and Ser269 each contribute to the isopentenyl diphosphate site.

The protein belongs to the IspH family. Homodimer. Requires [4Fe-4S] cluster as cofactor.

It carries out the reaction isopentenyl diphosphate + 2 oxidized [2Fe-2S]-[ferredoxin] + H2O = (2E)-4-hydroxy-3-methylbut-2-enyl diphosphate + 2 reduced [2Fe-2S]-[ferredoxin] + 2 H(+). The catalysed reaction is dimethylallyl diphosphate + 2 oxidized [2Fe-2S]-[ferredoxin] + H2O = (2E)-4-hydroxy-3-methylbut-2-enyl diphosphate + 2 reduced [2Fe-2S]-[ferredoxin] + 2 H(+). Its pathway is isoprenoid biosynthesis; dimethylallyl diphosphate biosynthesis; dimethylallyl diphosphate from (2E)-4-hydroxy-3-methylbutenyl diphosphate: step 1/1. It participates in isoprenoid biosynthesis; isopentenyl diphosphate biosynthesis via DXP pathway; isopentenyl diphosphate from 1-deoxy-D-xylulose 5-phosphate: step 6/6. Its function is as follows. Catalyzes the conversion of 1-hydroxy-2-methyl-2-(E)-butenyl 4-diphosphate (HMBPP) into a mixture of isopentenyl diphosphate (IPP) and dimethylallyl diphosphate (DMAPP). Acts in the terminal step of the DOXP/MEP pathway for isoprenoid precursor biosynthesis. This Sodalis glossinidius (strain morsitans) protein is 4-hydroxy-3-methylbut-2-enyl diphosphate reductase.